Here is a 231-residue protein sequence, read N- to C-terminus: Phosphoglycolate phosphatase (231 aa).

Asp9 acts as the Nucleophile in catalysis. Residues Asp9 and Asp11 each contribute to the Mg(2+) site. Position 154 (Lys154) interacts with substrate. Positions 177 and 181 each coordinate Mg(2+).

It belongs to the archaeal SPP-like hydrolase family. Requires Mg(2+) as cofactor.

It catalyses the reaction 2-phosphoglycolate + H2O = glycolate + phosphate. Functionally, catalyzes the dephosphorylation of 2-phosphoglycolate. This is Phosphoglycolate phosphatase from Nitrosopumilus maritimus (strain SCM1).